The primary structure comprises 171 residues: Adenine phosphoribosyltransferase (171 aa).

Belongs to the purine/pyrimidine phosphoribosyltransferase family. In terms of assembly, homodimer.

Its subcellular location is the cytoplasm. The enzyme catalyses AMP + diphosphate = 5-phospho-alpha-D-ribose 1-diphosphate + adenine. The protein operates within purine metabolism; AMP biosynthesis via salvage pathway; AMP from adenine: step 1/1. In terms of biological role, catalyzes a salvage reaction resulting in the formation of AMP, that is energically less costly than de novo synthesis. The protein is Adenine phosphoribosyltransferase of Mycoplasmopsis fermentans (strain ATCC 19989 / NBRC 14854 / NCTC 10117 / PG18) (Mycoplasma fermentans).